A 168-amino-acid polypeptide reads, in one-letter code: Xanthine-guanine phosphoribosyltransferase (168 aa).

5-phospho-alpha-D-ribose 1-diphosphate contacts are provided by residues 46-47 (RG) and 101-109 (DDLVDSGVT). D102 serves as a coordination point for Mg(2+). D105 contributes to the guanine binding site. Residues D105 and V148 each coordinate xanthine. GMP-binding positions include 105 to 109 (DSGVT) and 147 to 148 (WV).

Belongs to the purine/pyrimidine phosphoribosyltransferase family. XGPT subfamily. Homotetramer. Mg(2+) serves as cofactor.

It localises to the cell inner membrane. The enzyme catalyses GMP + diphosphate = guanine + 5-phospho-alpha-D-ribose 1-diphosphate. It carries out the reaction XMP + diphosphate = xanthine + 5-phospho-alpha-D-ribose 1-diphosphate. It catalyses the reaction IMP + diphosphate = hypoxanthine + 5-phospho-alpha-D-ribose 1-diphosphate. It participates in purine metabolism; GMP biosynthesis via salvage pathway; GMP from guanine: step 1/1. It functions in the pathway purine metabolism; XMP biosynthesis via salvage pathway; XMP from xanthine: step 1/1. In terms of biological role, purine salvage pathway enzyme that catalyzes the transfer of the ribosyl-5-phosphate group from 5-phospho-alpha-D-ribose 1-diphosphate (PRPP) to the N9 position of the 6-oxopurines guanine and xanthine to form the corresponding ribonucleotides GMP (guanosine 5'-monophosphate) and XMP (xanthosine 5'-monophosphate), with the release of PPi. To a lesser extent, also acts on hypoxanthine. This is Xanthine-guanine phosphoribosyltransferase from Gluconobacter oxydans (strain 621H) (Gluconobacter suboxydans).